We begin with the raw amino-acid sequence, 380 residues long: Tryptophan 2,3-dioxygenase (380 aa).

Substrate contacts are provided by residues 57–61 and Arg-128; that span reads FIITH. Heme is bound at residue His-313. A substrate-binding site is contributed by Thr-328.

The protein belongs to the tryptophan 2,3-dioxygenase family. As to quaternary structure, homotetramer. Dimer of dimers. Requires heme as cofactor.

The catalysed reaction is L-tryptophan + O2 = N-formyl-L-kynurenine. Its pathway is amino-acid degradation; L-tryptophan degradation via kynurenine pathway; L-kynurenine from L-tryptophan: step 1/2. It participates in pigment biosynthesis; ommochrome biosynthesis. Heme-dependent dioxygenase that catalyzes the oxidative cleavage of the L-tryptophan (L-Trp) pyrrole ring and converts L-tryptophan to N-formyl-L-kynurenine. Catalyzes the oxidative cleavage of the indole moiety. This is Tryptophan 2,3-dioxygenase from Drosophila virilis (Fruit fly).